A 119-amino-acid chain; its full sequence is Ig heavy chain V region T601 (119 aa).

In terms of domain architecture, Ig-like spans 1 to 112 (EVKLLESGGG…GYFDVWGAGT (112 aa)).

In Mus musculus (Mouse), this protein is Ig heavy chain V region T601.